The following is a 494-amino-acid chain: MFS-type transporter lnaF (494 aa).

A disordered region spans residues 1-51 (MTYDPENAMGEARADAPVEAEKEHEATQTTVKESTLGYDNSSDPSRRDSYR). The segment covering 12-26 (ARADAPVEAEKEHEA) has biased composition (basic and acidic residues). N-linked (GlcNAc...) asparagine glycosylation is found at asparagine 40, asparagine 58, and asparagine 68. Helical transmembrane passes span 105-125 (SLLI…DMFS), 128-148 (AGLL…TLAL), 156-176 (MLWY…GEYP), 203-223 (TLMA…CLIA), 228-248 (LPVT…IIMV), 290-310 (LAFF…STII), 323-343 (AIWQ…GAWL), 354-374 (ILGF…FPHL), 383-403 (VLYG…IGLI), and 446-466 (STFY…WFLP).

Belongs to the major facilitator superfamily. Sugar transporter (TC 2.A.1.1) family.

The protein localises to the cell membrane. Functionally, MFS-type transporter; part of the lna gene cluster that mediates the biosynthesis of diastereomeric piperazines. Lna and lnb clusters encode sets of enzymes that produce overlapping sets of previously undescribed metabolites such as piperazinomycin-like metabolites or morpholine. The lna and lnb biosynthetic pathways appear to be part of a signaling network that controls the formation of sclerotia, a resilient overwintering structure. May be involved in the secretion of the metabolites produced by the lna and lnb clusters. This Aspergillus flavus (strain ATCC 200026 / FGSC A1120 / IAM 13836 / NRRL 3357 / JCM 12722 / SRRC 167) protein is MFS-type transporter lnaF.